Here is a 159-residue protein sequence, read N- to C-terminus: 2-C-methyl-D-erythritol 2,4-cyclodiphosphate synthase (159 aa).

Aspartate 8 and histidine 10 together coordinate a divalent metal cation. Residues 8 to 10 (DSH) and 34 to 35 (HS) contribute to the 4-CDP-2-C-methyl-D-erythritol 2-phosphate site. Histidine 42 serves as a coordination point for a divalent metal cation. 4-CDP-2-C-methyl-D-erythritol 2-phosphate contacts are provided by residues 56–58 (DIG), 61–65 (FPDSD), phenylalanine 139, and arginine 142.

The protein belongs to the IspF family. In terms of assembly, homotrimer. A divalent metal cation serves as cofactor.

The catalysed reaction is 4-CDP-2-C-methyl-D-erythritol 2-phosphate = 2-C-methyl-D-erythritol 2,4-cyclic diphosphate + CMP. The protein operates within isoprenoid biosynthesis; isopentenyl diphosphate biosynthesis via DXP pathway; isopentenyl diphosphate from 1-deoxy-D-xylulose 5-phosphate: step 4/6. Its function is as follows. Involved in the biosynthesis of isopentenyl diphosphate (IPP) and dimethylallyl diphosphate (DMAPP), two major building blocks of isoprenoid compounds. Catalyzes the conversion of 4-diphosphocytidyl-2-C-methyl-D-erythritol 2-phosphate (CDP-ME2P) to 2-C-methyl-D-erythritol 2,4-cyclodiphosphate (ME-CPP) with a corresponding release of cytidine 5-monophosphate (CMP). In Syntrophus aciditrophicus (strain SB), this protein is 2-C-methyl-D-erythritol 2,4-cyclodiphosphate synthase.